The sequence spans 26 residues: Potassium channel toxin alpha-KTx6 OcyKTx1 (26 aa).

Cys3 and Cys24 are joined by a disulfide.

This sequence belongs to the short scorpion toxin superfamily. Potassium channel inhibitor family. Alpha-KTx 06 subfamily. Expressed by the venom gland.

It localises to the secreted. Its function is as follows. Blocks voltage-gated potassium channels. The protein is Potassium channel toxin alpha-KTx6 OcyKTx1 of Opisthacanthus cayaporum (South American scorpion).